Here is a 556-residue protein sequence, read N- to C-terminus: 2-succinyl-5-enolpyruvyl-6-hydroxy-3-cyclohexene-1-carboxylate synthase (556 aa).

It belongs to the TPP enzyme family. MenD subfamily. Homodimer. Mg(2+) serves as cofactor. Mn(2+) is required as a cofactor. The cofactor is thiamine diphosphate.

The catalysed reaction is isochorismate + 2-oxoglutarate + H(+) = 5-enolpyruvoyl-6-hydroxy-2-succinyl-cyclohex-3-ene-1-carboxylate + CO2. It functions in the pathway quinol/quinone metabolism; 1,4-dihydroxy-2-naphthoate biosynthesis; 1,4-dihydroxy-2-naphthoate from chorismate: step 2/7. The protein operates within quinol/quinone metabolism; menaquinone biosynthesis. Its function is as follows. Catalyzes the thiamine diphosphate-dependent decarboxylation of 2-oxoglutarate and the subsequent addition of the resulting succinic semialdehyde-thiamine pyrophosphate anion to isochorismate to yield 2-succinyl-5-enolpyruvyl-6-hydroxy-3-cyclohexene-1-carboxylate (SEPHCHC). This Escherichia coli O17:K52:H18 (strain UMN026 / ExPEC) protein is 2-succinyl-5-enolpyruvyl-6-hydroxy-3-cyclohexene-1-carboxylate synthase.